The sequence spans 75 residues: Cytochrome c oxidase assembly factor 5 (75 aa).

Residues 28 to 66 (QHDCVVKEGKKPSECLKEGHCRSMQVAFFECKRSMLDTR) form the CHCH domain. The Cx10C motif signature appears at 31–42 (CVVKEGKKPSEC). Cystine bridges form between cysteine 31–cysteine 58 and cysteine 42–cysteine 48. Residues 48 to 58 (CRSMQVAFFEC) carry the Cx9C motif motif.

The protein belongs to the PET191 family.

Functionally, involved in an early step of the mitochondrial complex IV assembly process. This chain is Cytochrome c oxidase assembly factor 5 (coa5), found in Danio rerio (Zebrafish).